Here is a 183-residue protein sequence, read N- to C-terminus: Phosphopantetheine adenylyltransferase (183 aa).

T13 serves as a coordination point for substrate. ATP-binding positions include 13 to 14 and H21; that span reads TF. Positions 45, 81, and 95 each coordinate substrate. ATP-binding positions include 96–98, E106, and 131–137; these read GLR and HQFISSR.

Belongs to the bacterial CoaD family. Homohexamer. The cofactor is Mg(2+).

The protein resides in the cytoplasm. It carries out the reaction (R)-4'-phosphopantetheine + ATP + H(+) = 3'-dephospho-CoA + diphosphate. It participates in cofactor biosynthesis; coenzyme A biosynthesis; CoA from (R)-pantothenate: step 4/5. Reversibly transfers an adenylyl group from ATP to 4'-phosphopantetheine, yielding dephospho-CoA (dPCoA) and pyrophosphate. This is Phosphopantetheine adenylyltransferase from Rhodospirillum centenum (strain ATCC 51521 / SW).